Consider the following 616-residue polypeptide: MEDTQDLNEQSVKKTCPEADVSEPQNSRSMEMQDLASPHALVGGSDTPGSSKLDKSGLSSTSVTTNGTGVSLLAVKTEPLHSSESTTTTGDGALDTFTGSVITSSGYSPRSAQQYSPQLYPSKPYPHILSTPAAQTMSAYAGQTQYSGMQQPAVYTAYSQTGQPYSLPAYDLGVMLPAIKTESGLSQTQSPLQSGCLSYSPGFSTPQPGQTPYSYQMPGSSFAPSSTIYANNSVSNSTNFSSSQQDYPSYTAFGQNQYAQYYSASTYGAYMTSNNTADGTSSSTSTYQLQESLQGLTSQPGEFDTVQSPSTPIKDLDDRTCRSSGSKSRGRGRKNNPSPPPDSDLERVFVWDLDETIIVFHSLLTGSYAQKYGKDPPMAVTLGLRMEEMIFNLADTHLFFNDLEECDQVHIDDVSSDDNGQDLSTYSFATDGFHAAASSANLCLPTGVRGGVDWMRKLAFRYRRVKELYNTYKNNVGGLLGPAKRDAWLQLRAEIEGLTDSWLTNALKSLSIISTRSNCVNVLVTTTQLIPALAKVLLYSLGGAFPIENIYSATKIGKESCFERIVSRFGTNITYVVIGDGRDEEHAANQHNMPFWRISSHSDLLALHQALELEYL.

Met-1 is modified (N-acetylmethionine). Disordered stretches follow at residues 1 to 66 (MEDT…VTTN), 186 to 211 (SQTQSPLQSGCLSYSPGFSTPQPGQT), and 277 to 345 (ADGT…DSDL). Glycyl lysine isopeptide (Lys-Gly) (interchain with G-Cter in SUMO2) cross-links involve residues Lys-14 and Lys-52. The span at 56–66 (SGLSSTSVTTN) shows a compositional bias: low complexity. Residues 277–311 (ADGTSSSTSTYQLQESLQGLTSQPGEFDTVQSPST) show a composition bias toward polar residues. Phosphoserine is present on Ser-338. Residue Asp-352 is the Nucleophile of the active site. Mg(2+) contacts are provided by Asp-352, Asp-354, and Asp-580. The active-site Proton donor is Asp-354.

This sequence belongs to the HAD-like hydrolase superfamily. EYA family. Interacts with SIX3; translocates EYA4 from the cytoplasm to the nucleus and promotes activation of their target genes. Mg(2+) is required as a cofactor. As to expression, in the embryo, expressed mainly in the craniofacial mesenchyme, dermamyotome and limb.

Its subcellular location is the cytoplasm. The protein localises to the nucleus. It catalyses the reaction O-phospho-L-tyrosyl-[protein] + H2O = L-tyrosyl-[protein] + phosphate. Functionally, tyrosine phosphatase that specifically dephosphorylates 'Tyr-142' of histone H2AX (H2AXY142ph). 'Tyr-142' phosphorylation of histone H2AX plays a central role in DNA repair and acts as a mark that distinguishes between apoptotic and repair responses to genotoxic stress. Promotes efficient DNA repair by dephosphorylating H2AX, promoting the recruitment of DNA repair complexes containing MDC1. Its function as histone phosphatase probably explains its role in transcription regulation during organogenesis. May be involved in development of the eye. The polypeptide is Protein phosphatase EYA4 (Eya4) (Mus musculus (Mouse)).